Here is a 240-residue protein sequence, read N- to C-terminus: 2,3,4,5-tetrahydropyridine-2,6-dicarboxylate N-acetyltransferase (240 aa).

It belongs to the transferase hexapeptide repeat family. DapH subfamily.

It catalyses the reaction (S)-2,3,4,5-tetrahydrodipicolinate + acetyl-CoA + H2O = L-2-acetamido-6-oxoheptanedioate + CoA. Its pathway is amino-acid biosynthesis; L-lysine biosynthesis via DAP pathway; LL-2,6-diaminopimelate from (S)-tetrahydrodipicolinate (acetylase route): step 1/3. In terms of biological role, catalyzes the transfer of an acetyl group from acetyl-CoA to tetrahydrodipicolinate. The protein is 2,3,4,5-tetrahydropyridine-2,6-dicarboxylate N-acetyltransferase of Halalkalibacterium halodurans (strain ATCC BAA-125 / DSM 18197 / FERM 7344 / JCM 9153 / C-125) (Bacillus halodurans).